We begin with the raw amino-acid sequence, 246 residues long: NADH-quinone oxidoreductase subunit C (246 aa).

It belongs to the complex I 30 kDa subunit family. In terms of assembly, NDH-1 is composed of 14 different subunits. Subunits NuoB, C, D, E, F, and G constitute the peripheral sector of the complex.

The protein resides in the cell inner membrane. The catalysed reaction is a quinone + NADH + 5 H(+)(in) = a quinol + NAD(+) + 4 H(+)(out). In terms of biological role, NDH-1 shuttles electrons from NADH, via FMN and iron-sulfur (Fe-S) centers, to quinones in the respiratory chain. The immediate electron acceptor for the enzyme in this species is believed to be ubiquinone. Couples the redox reaction to proton translocation (for every two electrons transferred, four hydrogen ions are translocated across the cytoplasmic membrane), and thus conserves the redox energy in a proton gradient. This is NADH-quinone oxidoreductase subunit C from Halorhodospira halophila (strain DSM 244 / SL1) (Ectothiorhodospira halophila (strain DSM 244 / SL1)).